The primary structure comprises 186 residues: ATP synthase subunit delta (186 aa).

Belongs to the ATPase delta chain family. In terms of assembly, F-type ATPases have 2 components, F(1) - the catalytic core - and F(0) - the membrane proton channel. F(1) has five subunits: alpha(3), beta(3), gamma(1), delta(1), epsilon(1). F(0) has three main subunits: a(1), b(2) and c(10-14). The alpha and beta chains form an alternating ring which encloses part of the gamma chain. F(1) is attached to F(0) by a central stalk formed by the gamma and epsilon chains, while a peripheral stalk is formed by the delta and b chains.

The protein localises to the cell membrane. Functionally, f(1)F(0) ATP synthase produces ATP from ADP in the presence of a proton or sodium gradient. F-type ATPases consist of two structural domains, F(1) containing the extramembraneous catalytic core and F(0) containing the membrane proton channel, linked together by a central stalk and a peripheral stalk. During catalysis, ATP synthesis in the catalytic domain of F(1) is coupled via a rotary mechanism of the central stalk subunits to proton translocation. In terms of biological role, this protein is part of the stalk that links CF(0) to CF(1). It either transmits conformational changes from CF(0) to CF(1) or is implicated in proton conduction. The sequence is that of ATP synthase subunit delta from Wolbachia pipientis wMel.